A 415-amino-acid polypeptide reads, in one-letter code: Methylaspartate ammonia-lyase 2 (415 aa).

Glutamine 173 provides a ligand contact to (2S,3S)-3-methyl-L-aspartate. Residues aspartate 238, glutamate 273, and aspartate 307 each coordinate Mg(2+). Glutamine 329 lines the (2S,3S)-3-methyl-L-aspartate pocket. Catalysis depends on lysine 331, which acts as the Proton acceptor. 360 to 361 (TC) provides a ligand contact to (2S,3S)-3-methyl-L-aspartate.

The protein belongs to the methylaspartate ammonia-lyase family. Homodimer. Mg(2+) is required as a cofactor.

It carries out the reaction (2S,3S)-3-methyl-L-aspartate = mesaconate + NH4(+). Its pathway is amino-acid degradation; L-glutamate degradation via mesaconate pathway; acetate and pyruvate from L-glutamate: step 2/4. Its function is as follows. Involved in the methylaspartate cycle. Catalyzes the formation of the alpha,beta-unsaturated bond by the reversible anti elimination of ammonia from L-threo-beta-methylaspartate (L-threo-(2S,3S)-3-methylaspartate) to give mesaconate. The sequence is that of Methylaspartate ammonia-lyase 2 from Carboxydothermus hydrogenoformans (strain ATCC BAA-161 / DSM 6008 / Z-2901).